A 234-amino-acid chain; its full sequence is Sugar fermentation stimulation protein homolog (234 aa).

Belongs to the SfsA family.

This is Sugar fermentation stimulation protein homolog from Citrobacter koseri (strain ATCC BAA-895 / CDC 4225-83 / SGSC4696).